A 424-amino-acid chain; its full sequence is S-adenosylmethionine synthase (424 aa).

Histidine 16 is a binding site for ATP. Residue aspartate 18 participates in Mg(2+) binding. Position 44 (glutamate 44) interacts with K(+). L-methionine is bound by residues glutamate 57 and glutamine 100. The interval 100–110 (QSPDIAQGVNT) is flexible loop. ATP contacts are provided by residues 175–177 (DGK), 251–252 (KF), aspartate 260, 266–267 (RK), alanine 283, and lysine 287. Residue aspartate 260 coordinates L-methionine. L-methionine is bound at residue lysine 291.

Belongs to the AdoMet synthase family. Homotetramer; dimer of dimers. Mg(2+) is required as a cofactor. K(+) serves as cofactor.

Its subcellular location is the cytoplasm. The catalysed reaction is L-methionine + ATP + H2O = S-adenosyl-L-methionine + phosphate + diphosphate. It functions in the pathway amino-acid biosynthesis; S-adenosyl-L-methionine biosynthesis; S-adenosyl-L-methionine from L-methionine: step 1/1. Functionally, catalyzes the formation of S-adenosylmethionine (AdoMet) from methionine and ATP. The overall synthetic reaction is composed of two sequential steps, AdoMet formation and the subsequent tripolyphosphate hydrolysis which occurs prior to release of AdoMet from the enzyme. The polypeptide is S-adenosylmethionine synthase (Nostoc punctiforme (strain ATCC 29133 / PCC 73102)).